A 230-amino-acid polypeptide reads, in one-letter code: Ribose-5-phosphate isomerase A (230 aa).

Substrate is bound by residues 32–35 (TGST), 85–88 (DGAD), and 98–101 (KGGG). Glu-107 acts as the Proton acceptor in catalysis. Position 125 (Lys-125) interacts with substrate.

The protein belongs to the ribose 5-phosphate isomerase family. As to quaternary structure, homodimer.

The enzyme catalyses aldehydo-D-ribose 5-phosphate = D-ribulose 5-phosphate. It functions in the pathway carbohydrate degradation; pentose phosphate pathway; D-ribose 5-phosphate from D-ribulose 5-phosphate (non-oxidative stage): step 1/1. Functionally, catalyzes the reversible conversion of ribose-5-phosphate to ribulose 5-phosphate. The sequence is that of Ribose-5-phosphate isomerase A from Burkholderia ambifaria (strain ATCC BAA-244 / DSM 16087 / CCUG 44356 / LMG 19182 / AMMD) (Burkholderia cepacia (strain AMMD)).